A 649-amino-acid chain; its full sequence is ABC transporter G family member 5 (649 aa).

The ABC transporter domain occupies 42 to 284; the sequence is VKTEEESLKL…LRSNGLHPPL (243 aa). 80–87 lines the ATP pocket; it reads GPSGAGKS. Residues 308-336 are disordered; the sequence is SRRAAHVLTPQTTLQEKRSEDSQGESKSG. An ABC transmembrane type-2 domain is found at 371 to 581; sequence EETMILTHRF…PFEGFLINEF (211 aa). 6 helical membrane-spanning segments follow: residues 390-410, 425-445, 474-494, 506-526, 529-549, and 617-637; these read LFAC…LIFH, LFAF…PIFL, LPFL…LVGL, LLIW…SALV, FIVG…FSGY, and VVIM…ILRC.

Belongs to the ABC transporter superfamily. ABCG family. Eye pigment precursor importer (TC 3.A.1.204) subfamily.

Its subcellular location is the membrane. The protein is ABC transporter G family member 5 (ABCG5) of Arabidopsis thaliana (Mouse-ear cress).